Consider the following 113-residue polypeptide: MFNWLNFFNFFFFFLFFVFLTTSFNFFCLVLTSELMWALLLLISAVLGSILDDFFLASFAFLLLGFASVELSIGLILMVYLKTTNLSLNLAAHKGSSYATLFLLKKGASKKKI.

Its subcellular location is the mitochondrion. This is an uncharacterized protein from Paramecium tetraurelia.